The sequence spans 101 residues: Small ribosomal subunit protein uS10 (101 aa).

Belongs to the universal ribosomal protein uS10 family. Part of the 30S ribosomal subunit.

Functionally, involved in the binding of tRNA to the ribosomes. The chain is Small ribosomal subunit protein uS10 from Bacteroides fragilis (strain ATCC 25285 / DSM 2151 / CCUG 4856 / JCM 11019 / LMG 10263 / NCTC 9343 / Onslow / VPI 2553 / EN-2).